A 518-amino-acid chain; its full sequence is Sensor protein kinase HptS (518 aa).

The next 2 helical transmembrane spans lie at 20-40 and 222-242; these read IFPV…IYIW and GITL…FGFI. The 217-residue stretch at 297–513 folds into the Histidine kinase domain; that stretch reads EQLIHSIEHT…LICYKIPLSR (217 aa). Phosphohistidine; by autocatalysis is present on H325.

Autophosphorylated.

Its subcellular location is the cell membrane. It catalyses the reaction ATP + protein L-histidine = ADP + protein N-phospho-L-histidine.. In terms of biological role, member of the two-component regulatory system HptS/HptR that regulates genes involved in hexose phosphate transport system in response to changes in extracellular phosphate sources. May act as a sensor protein kinase which is autophosphorylated at a histidine residue and transfers its phosphate group to the conserved aspartic acid residue in the regulatory domain of HptS. In turn, HptS antagonizes CcpA-dependent transcription of a subset of CcpA-regulated genes involved in antibiotic susceptibility. The sequence is that of Sensor protein kinase HptS (hptS) from Staphylococcus aureus (strain MRSA252).